The chain runs to 247 residues: Flavin-dependent thymidylate synthase (247 aa).

One can recognise a ThyX domain in the interval 1–237 (MRVRLLEATE…PHTFEYYDAE (237 aa)). DUMP-binding positions include 85–88 (QLTR), 98–100 (SMR), and Arg176. Residue 88-90 (RHR) participates in FAD binding. Positions 88–98 (RHRHASFDVQS) match the ThyX motif motif. FAD is bound by residues 192–194 (NPR) and His198. A dUMP-binding site is contributed by Arg203. Arg203 (involved in ionization of N3 of dUMP, leading to its activation) is an active-site residue.

The protein belongs to the thymidylate synthase ThyX family. As to quaternary structure, homotetramer. The cofactor is FAD.

It carries out the reaction dUMP + (6R)-5,10-methylene-5,6,7,8-tetrahydrofolate + NADPH + H(+) = dTMP + (6S)-5,6,7,8-tetrahydrofolate + NADP(+). It functions in the pathway pyrimidine metabolism; dTTP biosynthesis. Catalyzes the reductive methylation of 2'-deoxyuridine-5'-monophosphate (dUMP) to 2'-deoxythymidine-5'-monophosphate (dTMP) while utilizing 5,10-methylenetetrahydrofolate (mTHF) as the methyl donor, and NADPH and FADH(2) as the reductant. In Halobacterium salinarum (strain ATCC 700922 / JCM 11081 / NRC-1) (Halobacterium halobium), this protein is Flavin-dependent thymidylate synthase.